The primary structure comprises 356 residues: tRNA N6-adenosine threonylcarbamoyltransferase (356 aa).

His-115 and His-119 together coordinate Fe cation. Substrate contacts are provided by residues 138-142, Asp-171, Gly-184, and Asn-283; that span reads LVSGG. Residue Asp-311 coordinates Fe cation.

The protein belongs to the KAE1 / TsaD family. Fe(2+) serves as cofactor.

The protein localises to the cytoplasm. The enzyme catalyses L-threonylcarbamoyladenylate + adenosine(37) in tRNA = N(6)-L-threonylcarbamoyladenosine(37) in tRNA + AMP + H(+). In terms of biological role, required for the formation of a threonylcarbamoyl group on adenosine at position 37 (t(6)A37) in tRNAs that read codons beginning with adenine. Is involved in the transfer of the threonylcarbamoyl moiety of threonylcarbamoyl-AMP (TC-AMP) to the N6 group of A37, together with TsaE and TsaB. TsaD likely plays a direct catalytic role in this reaction. The protein is tRNA N6-adenosine threonylcarbamoyltransferase of Prochlorococcus marinus (strain NATL2A).